Consider the following 1865-residue polypeptide: Transcription initiation factor TFIID subunit 1 (1865 aa).

Residues 1–27 are disordered; that stretch reads MLLPATGASRSAAIMSDTDSDEDSSGG. A Protein kinase 1 domain is found at 1–409; sequence MLLPATGASR…VTQLHWEDDI (409 aa). Phosphoserine; by autocatalysis is present on Ser131. A disordered region spans residues 144–199; that stretch reads EDIDCKLMPPPPPPPGPVKKEKDQDGLTGEKVDFSSSSDSESEMGPQEAAQAESKD. Over residues 151–160 the composition is skewed to pro residues; that stretch reads MPPPPPPPGP. Residues 161–176 show a composition bias toward basic and acidic residues; the sequence is VKKEKDQDGLTGEKVD. Ser302 bears the Phosphoserine; by autocatalysis mark. The segment at 509 to 530 is disordered; it reads PDEKEEATSNSPSKENKKESSL. A histone acetyltransferase (HAT) region spans residues 512–971; the sequence is KEEATSNSPS…KIPNKPTQQK (460 aa). N6-acetyllysine is present on Lys539. Glycyl lysine isopeptide (Lys-Gly) (interchain with G-Cter in SUMO2) cross-links involve residues Lys544 and Lys557. Disordered stretches follow at residues 964–983 and 1228–1252; these read PNKP…KKTV and RLKR…MKER. 2 stretches are compositionally biased toward basic and acidic residues: residues 969–978 and 1228–1244; these read QQKDDKEPQP and RLKR…PPEK. The HMG box DNA-binding region spans 1190–1268; that stretch reads VRIRTTKDEE…CGACGAIGHM (79 aa). The interaction with ASF1A and ASF1B stretch occupies residues 1337–1624; the sequence is VLKFPKQQLP…TAKEAALEEA (288 aa). The Nuclear localization signal signature appears at 1346–1353; it reads PPKKKRRV. Bromo domains follow at residues 1371-1479 and 1493-1602; these read RRRT…LKEK and LLDD…LTEY. A Protein kinase 2 domain is found at 1420-1865; sequence MDLQTLRENV…AGDSDMDSDE (446 aa). The disordered stretch occupies residues 1625 to 1865; the sequence is ELESLDPMTP…AGDSDMDSDE (241 aa). The segment covering 1633 to 1642 has biased composition (pro residues); sequence TPGPYTPQPP. A compositionally biased stretch (polar residues) spans 1646 to 1682; it reads DNSTSLSVSRDASVYQDESNMSVLDIPSATSEKQLTQ. A phosphoserine mark is found at Ser1664 and Ser1667. Composition is skewed to acidic residues over residues 1683-1697 and 1715-1730; these read EGED…EEEG and EGED…EEGD. Residues 1739–1751 show a composition bias toward low complexity; that stretch reads SESGSDSDVGSGS. 3 positions are modified to phosphoserine: Ser1773, Ser1776, and Ser1794. Residues 1804 to 1814 show a composition bias toward polar residues; the sequence is KSNTQDTSFSS. Acidic residues predominate over residues 1820–1829; that stretch reads VSEEEEDEEE. A Phosphoserine modification is found at Ser1821. Residues 1832–1841 show a composition bias toward polar residues; the sequence is SGPSVLSQVH.

Belongs to the TAF1 family. In terms of assembly, component of the TFIID basal transcription factor complex, composed of TATA-box-binding protein TBP, and a number of TBP-associated factors (TAFs), including TAF1, TAF2, TAF3, TAF4, TAF5, TAF6, TAF7, TAF8, TAF9, TAF10, TAF11, TAF12 and TAF13. Interacts with TAF7; the interaction is direct. TAF1, when part of the TFIID complex, interacts with C-terminus of TP53. Part of a TFIID-containing RNA polymerase II pre-initiation complex that is composed of TBP and at least GTF2A1, GTF2A2, GTF2E1, GTF2E2, GTF2F1, GTF2H2, GTF2H3, GTF2H4, GTF2H5, GTF2B, TCEA1, ERCC2, ERCC3, TAF1, TAF2, TAF3, TAF4, TAF5, TAF6, TAF7, TAF8, TAF9, TAF10, TAF11, TAF12 and TAF13. Component of some MLL1/MLL complex, at least composed of the core components KMT2A/MLL1, ASH2L, HCFC1/HCF1, WDR5 and RBBP5, as well as the facultative components BACC1, CHD8, E2F6, HSP70, INO80C, KANSL1, LAS1L, MAX, MCRS1, MGA, KAT8/MOF, PELP1, PHF20, PRP31, RING2, RUVB1/TIP49A, RUVB2/TIP49B, SENP3, TAF1, TAF4, TAF6, TAF7, TAF9 and TEX10. RB1 interacts with the N-terminal domain of TAF1. Interacts with ASF1A and ASF1B. Interacts (via bromo domains) with acetylated lysine residues on the N-terminus of histone H1.4, H2A, H2B, H3 and H4 (in vitro). The cofactor is Mg(2+). Phosphorylated by casein kinase II in vitro.

It localises to the nucleus. It carries out the reaction L-seryl-[protein] + ATP = O-phospho-L-seryl-[protein] + ADP + H(+). The catalysed reaction is L-threonyl-[protein] + ATP = O-phospho-L-threonyl-[protein] + ADP + H(+). The enzyme catalyses L-lysyl-[protein] + acetyl-CoA = N(6)-acetyl-L-lysyl-[protein] + CoA + H(+). Its activity is regulated as follows. Autophosphorylates on Ser residues. Inhibited by retinoblastoma tumor suppressor protein, RB1. Binding to TAF1 or CIITA inhibits the histone acetyltransferase activity. The TFIID basal transcription factor complex plays a major role in the initiation of RNA polymerase II (Pol II)-dependent transcription. TFIID recognizes and binds promoters with or without a TATA box via its subunit TBP, a TATA-box-binding protein, and promotes assembly of the pre-initiation complex (PIC). The TFIID complex consists of TBP and TBP-associated factors (TAFs), including TAF1, TAF2, TAF3, TAF4, TAF5, TAF6, TAF7, TAF8, TAF9, TAF10, TAF11, TAF12 and TAF13. TAF1 is the largest component and core scaffold of the TFIID complex, involved in nucleating complex assembly. TAF1 forms a promoter DNA binding subcomplex of TFIID, together with TAF7 and TAF2. Contains novel N- and C-terminal Ser/Thr kinase domains which can autophosphorylate or transphosphorylate other transcription factors. Phosphorylates TP53 on 'Thr-55' which leads to MDM2-mediated degradation of TP53. Phosphorylates GTF2A1 and GTF2F1 on Ser residues. Possesses DNA-binding activity. Essential for progression of the G1 phase of the cell cycle. This chain is Transcription initiation factor TFIID subunit 1, found in Mesocricetus auratus (Golden hamster).